Consider the following 479-residue polypeptide: MDATSAPHRIPPEMPQYGEDYHIFEMMQSMLEQLLIHQPEDPISFMISHLRRNNDNVPRVVILGPPASGKTTIAMWLCKHLNSNLITKENLLEREFSLLSLEAKKHYQVYKRVPNSTLVSLVQERLNEDDCLRRGWILDGIPERREQALMIQTLGLAPKHVIVLSAPDSVLIERNVGKRIDPVTGEIYHTTFDWPPELEIQNRLIQPEGISEIDTAKKLLEYHRHIIRILPSYPKILKTISSDQPCVDVFYQALTYVQSGHRCNAPFTPKVLLCGPMGCGKKLQAALLSQKYGLVNISCGQLLKEAMAAESSLGDLIEPFFEKRMTVPDSIITRVLTERLKQQDCIQKGWVLHGFPRDLDQARLLNSMGYSPNRVFFLNVPLDSILERLTLRRTDPVTGERFHLMYKPPPTIEVQARLLQNPKDSEEYIKLQTDLFYRNSGDLEQYYDRAIIVNGDQDPYTVFEYIESGIINPLPRKVT.

Adenylate kinase stretches follow at residues 58-258 and 269-471; these read PRVV…TYVQ and PKVL…SGII. Residue 67–72 participates in ATP binding; that stretch reads ASGKTT. The interval 87-113 is NMP 1; sequence TKENLLEREFSLLSLEAKKHYQVYKRV. Residues 140–143, Gln147, and Arg203 each bind AMP; that span reads GIPE. The LID 1 stretch occupies residues 177–206; sequence GKRIDPVTGEIYHTTFDWPPELEIQNRLIQ. Position 278-283 (278-283) interacts with ATP; the sequence is GCGKKL. Residues 298 to 327 form an NMP 2 region; the sequence is SCGQLLKEAMAAESSLGDLIEPFFEKRMTV. AMP contacts are provided by residues 325–327, 354–357, and Gln361; these read MTV and GFPR. The LID 2 stretch occupies residues 391-424; it reads LRRTDPVTGERFHLMYKPPPTIEVQARLLQNPKD. Arg392 contacts ATP.

It belongs to the adenylate kinase family. In terms of assembly, interacts with CFAP45 and CFAP52; CFAP45 and AK8 dimerization may create a cavity at the interface of the dimer that can accommodate AMP.

Its subcellular location is the cytoplasm. It localises to the cytosol. The protein resides in the cytoskeleton. The protein localises to the cilium axoneme. The catalysed reaction is AMP + ATP = 2 ADP. It carries out the reaction a 2'-deoxyribonucleoside 5'-diphosphate + ATP = a 2'-deoxyribonucleoside 5'-triphosphate + ADP. It catalyses the reaction a ribonucleoside 5'-diphosphate + ATP = a ribonucleoside 5'-triphosphate + ADP. Functionally, nucleoside monophosphate (NMP) kinase that catalyzes the reversible transfer of the terminal phosphate group between nucleoside triphosphates and monophosphates. Has highest activity toward AMP, and weaker activity toward dAMP, CMP and dCMP. Also displays broad nucleoside diphosphate kinase activity. In Rattus norvegicus (Rat), this protein is Adenylate kinase 8 (Ak8).